The sequence spans 543 residues: NADH-ubiquinone oxidoreductase chain 4 (543 aa).

The next 14 membrane-spanning stretches (helical) occupy residues 5–25, 84–104, 129–149, 161–181, 182–202, 213–233, 254–274, 287–307, 321–341, 350–370, 377–397, 416–436, 456–476, and 501–521; these read FLMF…IIWS, VVAF…YILF, VDGI…IALM, SYLI…LVLD, ILLF…LIGL, FYIF…ILTM, IQIF…PTIF, PLGG…YGIF, YTYI…FSTL, IAYS…SNTI, ILLG…VGGV, MAPL…GVPL, LLGL…IFLF, and FYAL…PSII.

Belongs to the complex I subunit 4 family.

Its subcellular location is the mitochondrion membrane. It carries out the reaction a ubiquinone + NADH + 5 H(+)(in) = a ubiquinol + NAD(+) + 4 H(+)(out). In terms of biological role, core subunit of the mitochondrial membrane respiratory chain NADH dehydrogenase (Complex I) that is believed to belong to the minimal assembly required for catalysis. Complex I functions in the transfer of electrons from NADH to the respiratory chain. The immediate electron acceptor for the enzyme is believed to be ubiquinone. The chain is NADH-ubiquinone oxidoreductase chain 4 (ndh-4) from Neurospora crassa (strain ATCC 24698 / 74-OR23-1A / CBS 708.71 / DSM 1257 / FGSC 987).